We begin with the raw amino-acid sequence, 872 residues long: TATA box-binding protein-associated factor RNA polymerase I subunit B (872 aa).

The RRN7-type zinc finger occupies 6–40 (ETMQLENMHCDVCEGTTFQEREGFYYCVECGTQKD). Cysteine 15, cysteine 18, cysteine 32, and cysteine 35 together coordinate Zn(2+). The interval 41 to 72 (QIRAVDITAEDNFDDTAAGRYTARTIRQKKDT) is B-reader. Positions 73–84 (EKEDEDDITSWE) are B-linker. Positions 85-312 (FYNYVLRGFL…LPGNVAAKGK (228 aa)) are N-terminal cyclin fold. The segment at 187–206 (DASGYRSHGGASESEGEQSL) is disordered.

It belongs to the RRN7/TAF1B family.

The protein resides in the nucleus. It is found in the nucleolus. Component of RNA polymerase I core factor complex that acts as a GTF2B/TFIIB-like factor and plays a key role in multiple steps during transcription initiation such as pre-initiation complex (PIC) assembly and postpolymerase recruitment events in polymerase I (Pol I) transcription. Binds rDNA promoters and plays a role in Pol I recruitment. The protein is TATA box-binding protein-associated factor RNA polymerase I subunit B of Drosophila melanogaster (Fruit fly).